The primary structure comprises 468 residues: Beta-monoglucosyldiacylglycerol synthase (468 aa).

4 helical membrane-spanning segments follow: residues 51–71 (AALV…VSWG), 72–92 (SIFI…VVFA), 358–378 (MLMF…DLLM), and 387–407 (MLGP…FAGL).

Belongs to the glycosyltransferase 2 family. It depends on Mg(2+) as a cofactor.

The protein resides in the membrane. It carries out the reaction a 1,2-diacyl-sn-glycerol + UDP-alpha-D-glucose = a 1,2-diacyl-3-O-(beta-D-glucopyranosyl)-sn-glycerol + UDP + H(+). Functionally, glucosyltransferase involved in the biosynthesis of the non-bilayer-forming membrane lipid beta-monoglucosyldiacylglycerol which contributes to regulate the properties and stability of the membrane. Catalyzes the transfer of a glucosyl residue from UDP-Glc to diacylglycerol (DAG) acceptor to form the corresponding beta-glucosyl-DAG (1,2-diacyl-3-O-(beta-D-glucopyranosyl)-sn-glycerol). It can only use UDP-Glc as sugar donor. Two types of DAG (dipalmitoyl-DAG (DPDAG) and 1-oleoyl-2-palmitoyl-DAG (OPDAG)) can be used as sugar acceptors, but OPDAG is preferred. In Nostoc sp. (strain PCC 7120 / SAG 25.82 / UTEX 2576), this protein is Beta-monoglucosyldiacylglycerol synthase.